A 143-amino-acid polypeptide reads, in one-letter code: Small ribosomal subunit protein eS19y (143 aa).

It belongs to the eukaryotic ribosomal protein eS19 family.

This is Small ribosomal subunit protein eS19y (RPS19B) from Arabidopsis thaliana (Mouse-ear cress).